Here is a 689-residue protein sequence, read N- to C-terminus: 7SK snRNA methylphosphate capping enzyme (689 aa).

At Met1 the chain carries N-acetylmethionine. Residues 1–10 (MIEMAAEKEP) show a composition bias toward basic and acidic residues. A disordered region spans residues 1–167 (MIEMAAEKEP…GGGGFKHPAF (167 aa)). Positions 52–84 (GRCAPSAGSPAAAVGRESPGAAATSSSGPQAQQ) are enriched in low complexity. 4 positions are modified to phosphoserine: Ser57, Ser60, Ser69, and Ser101. The residue at position 117 (Arg117) is an Omega-N-methylarginine. Ser152, Ser175, and Ser179 each carry phosphoserine. Position 213 is a phosphothreonine (Thr213). Ser216, Ser217, and Ser254 each carry phosphoserine. The span at 258 to 269 (TGRKRHRHRGQH) shows a compositional bias: basic residues. Residues 258 to 314 (TGRKRHRHRGQHHQQQQAAGGSESHPVPPTAPLTPLLHGEGASQQPRHRGQNRDAPQ) are disordered. At Thr291 the chain carries Phosphothreonine. Residues Ser330 and Ser344 each carry the phosphoserine modification. A disordered region spans residues 332–407 (LPSALQGPSG…HHPLPAAGFK (76 aa)). A compositionally biased stretch (low complexity) spans 338 to 359 (GPSGSLSAPPAASVISAPPSSS). Residues 360–369 (SRHRKRRRTS) show a composition bias toward basic residues. Ser390 carries the post-translational modification Phosphoserine. Residues Tyr422, Arg433, 451 to 453 (GCN), 474 to 475 (DI), 559 to 560 (NY), and Leu581 each bind S-adenosyl-L-methionine. A Bin3-type SAM domain is found at 431-686 (DGRLRVLKPE…PVYLFHKARS (256 aa)). Residue Lys643 forms a Glycyl lysine isopeptide (Lys-Gly) (interchain with G-Cter in SUMO2) linkage.

This sequence belongs to the methyltransferase superfamily. Core component of the 7SK RNP complex, at least composed of 7SK RNA, LARP7, MEPCE, HEXIM1 (or HEXIM2) and P-TEFb (composed of CDK9 and CCNT1/cyclin-T1). Interacts with METTL16. Interacts with RBM7; upon genotoxic stress this interaction is enhanced, triggering the release of inactive P-TEFb complex from the core, yielding to P-TEFb complex activation. Dephosphorylated at Ser-152 by the PNUTS-PP1 complex, promoting RNA polymerase II transcription pause-release. Expressed in chronic myeloid leukemia cells, adrenal gland, brain, cerebellum, kidney, lung, mammary gland and testis. Weakly or not expressed in other tissues.

It is found in the nucleus. It carries out the reaction a 5'-end triphospho-guanosine-ribonucleotide-snRNA + S-adenosyl-L-methionine = a 5'-end methyltriphosphate-guanosine-ribonucleotide-snRNA + S-adenosyl-L-homocysteine. Its function is as follows. S-adenosyl-L-methionine-dependent methyltransferase that adds a methylphosphate cap at the 5'-end of 7SK snRNA (7SK RNA), leading to stabilize it. Also has a non-enzymatic function as part of the 7SK RNP complex: the 7SK RNP complex sequesters the positive transcription elongation factor b (P-TEFb) in a large inactive 7SK RNP complex preventing RNA polymerase II phosphorylation and subsequent transcriptional elongation. The 7SK RNP complex also promotes snRNA gene transcription by RNA polymerase II via interaction with the little elongation complex (LEC). In the 7SK RNP complex, MEPCE is required to stabilize 7SK RNA and facilitate the assembly of 7SK RNP complex. MEPCE has a non-enzymatic function in the 7SK RNP complex; interaction with LARP7 within the 7SK RNP complex occluding its catalytic center. Also required for stability of U6 snRNAs. The polypeptide is 7SK snRNA methylphosphate capping enzyme (Homo sapiens (Human)).